Reading from the N-terminus, the 415-residue chain is Packaging protein 3 (415 aa).

Disordered regions lie at residues Met-1–Ala-56 and Glu-66–Lys-85. The interaction with packaging protein 1 stretch occupies residues Met-1–Ser-173. Residues Pro-31–Asp-46 are compositionally biased toward low complexity. The residue at position 75 (Ser-75) is a Phosphoserine; by host. Basic and acidic residues predominate over residues Pro-76–Lys-85. Residue Ser-360 is modified to Phosphoserine; by host. Residues Gly-381–Gly-394 show a composition bias toward low complexity. The disordered stretch occupies residues Gly-381–Tyr-415. Residues Glu-400–Tyr-415 show a composition bias toward acidic residues.

Belongs to the adenoviridae packaging protein 3 family. As to quaternary structure, part of the genome packaging complex composed of packaging proteins 1, 2 and 3; this complex specifically binds to the packaging sequence on the left end of viral genomic DNA and performs packaging of the viral genome. Interacts with hexon-linking protein IIIa; this interaction is required to promote correct genome packaging. Cleaved at different sites by the viral protease during virion maturation.

The protein localises to the host nucleus. Involved in viral genome packaging through its interaction with packaging proteins 1 and 2. After proteolytic cleavage by adenovirus protease, L1 52/55k protein is removed from the capsid during viral maturation. The sequence is that of Packaging protein 3 from Human adenovirus C serotype 2 (HAdV-2).